We begin with the raw amino-acid sequence, 210 residues long: DNA-directed RNA polymerases I, II, and III subunit RPABC1 (210 aa).

An N-acetylmethionine modification is found at methionine 1. A Glycyl lysine isopeptide (Lys-Gly) (interchain with G-Cter in SUMO2) cross-link involves residue lysine 81.

Belongs to the archaeal Rpo5/eukaryotic RPB5 RNA polymerase subunit family. In terms of assembly, component of the RNA polymerase I (Pol I), RNA polymerase II (Pol II) and RNA polymerase III (Pol III) complexes consisting of at least 13, 12 and 17 subunits, respectively. Pol I complex consists of a ten-subunit catalytic core composed of POLR1A/RPA1, POLR1B/RPA2, POLR1C/RPAC1, POLR1D/RPAC2, POLR1H/RPA12, POLR2E/RPABC1, POLR2F/RPABC2, POLR2H/RPABC3, POLR2K/RPABC4 and POLR2L/RPABC5; a mobile stalk subunit POLR1F/RPA43 protruding from the core and additional subunits homologous to general transcription factors POLR1E/RPA49 and POLR1G/RPA34. Part of Pol I pre-initiation complex (PIC), in which Pol I core assembles with RRN3 and promoter-bound UTBF and SL1/TIF-IB complex. Pol II complex contains a ten-subunit catalytic core composed of POLR2A/RPB1, POLR2B/RPB2, POLR2C/RPB3, POLR2I/RPB9, POLR2J/RPB11, POLR2E/RPABC1, POLR2F/RPABC2, POLR2H/RPABC3, POLR2K/RPABC4 and POLR2L/RPABC5 and a mobile stalk composed of two subunits POLR2D/RPB4 and POLR2G/RPB7. Part of Pol II(G) complex, in which Pol II core associates with an additional subunit POLR2M; unlike conventional Pol II, Pol II(G) functions as a transcriptional repressor. Part of TBP-based Pol II pre-initiation complex (PIC), in which Pol II core assembles with general transcription factors and other specific initiation factors including GTF2E1, GTF2E2, GTF2F1, GTF2F2, TCEA1, ERCC2, ERCC3, GTF2H2, GTF2H3, GTF2H4, GTF2H5, GTF2A1, GTF2A2, GTF2B and TBP; this large multi-subunit PIC complex mediates DNA unwinding and targets Pol II core to the transcription start site where the first phosphodiester bond forms. In Pol II complex, this subunit is present in 2-fold molar excess over the other subunits. Pol III complex consists of a ten-subunit catalytic core composed of POLR3A/RPC1, POLR3B/RPC2, POLR1C/RPAC1, POLR1D/RPAC2, POLR3K/RPC10, POLR2E/RPABC1, POLR2F/RPABC2, POLR2H/RPABC3, POLR2K/RPABC4 and POLR2L/RPABC5; a mobile stalk composed of two subunits POLR3H/RPC8 and CRCP/RPC9, protruding from the core and functioning primarily in transcription initiation; and additional subunits homologous to general transcription factors of the RNA polymerase II machinery, POLR3C/RPC3-POLR3F/RPC6-POLR3G/RPC7 heterotrimer required for transcription initiation and POLR3D/RPC4-POLR3E/RPC5 heterodimer involved in both transcription initiation and termination. Component of the PAQosome complex which is responsible for the biogenesis of several protein complexes and which consists of R2TP complex members RUVBL1, RUVBL2, RPAP3 and PIH1D1, URI complex members PFDN2, PFDN6, PDRG1, UXT and URI1 as well as ASDURF, POLR2E and DNAAF10/WDR92. Interacts with URI1.

The protein resides in the nucleus. It localises to the nucleolus. DNA-dependent RNA polymerase catalyzes the transcription of DNA into RNA using the four ribonucleoside triphosphates as substrates. Common component of RNA polymerases I, II and III which synthesize ribosomal RNA precursors, mRNA precursors and many functional non-coding RNAs, and small RNAs, such as 5S rRNA and tRNAs, respectively. Pol II is the central component of the basal RNA polymerase II transcription machinery. Pols are composed of mobile elements that move relative to each other. In Pol II, POLR2E/RPABC1 is part of the lower jaw surrounding the central large cleft and thought to grab the incoming DNA template. Seems to be the major component in this process. The protein is DNA-directed RNA polymerases I, II, and III subunit RPABC1 (POLR2E) of Pongo abelii (Sumatran orangutan).